A 221-amino-acid polypeptide reads, in one-letter code: PKHD-type hydroxylase P9515_13321 (221 aa).

Residues 80–174 form the Fe2OG dioxygenase domain; the sequence is TIHGIMFTKS…RLVCVGWIES (95 aa). The Fe cation site is built by histidine 98, aspartate 100, and histidine 155. Arginine 165 is a binding site for 2-oxoglutarate.

The cofactor is Fe(2+). It depends on L-ascorbate as a cofactor.

This is PKHD-type hydroxylase P9515_13321 from Prochlorococcus marinus (strain MIT 9515).